A 218-amino-acid chain; its full sequence is Octanoyltransferase (218 aa).

Residues 32–218 form the BPL/LPL catalytic domain; the sequence is GEAAEAIWLL…LRTFPQHFPD (187 aa). Substrate contacts are provided by residues 71-78, 151-153, and 164-166; these read RGGQYTYH, AIG, and GLS. Cysteine 182 functions as the Acyl-thioester intermediate in the catalytic mechanism.

Belongs to the LipB family.

It is found in the cytoplasm. The enzyme catalyses octanoyl-[ACP] + L-lysyl-[protein] = N(6)-octanoyl-L-lysyl-[protein] + holo-[ACP] + H(+). It participates in protein modification; protein lipoylation via endogenous pathway; protein N(6)-(lipoyl)lysine from octanoyl-[acyl-carrier-protein]: step 1/2. Its function is as follows. Catalyzes the transfer of endogenously produced octanoic acid from octanoyl-acyl-carrier-protein onto the lipoyl domains of lipoate-dependent enzymes. Lipoyl-ACP can also act as a substrate although octanoyl-ACP is likely to be the physiological substrate. The protein is Octanoyltransferase of Cereibacter sphaeroides (strain ATCC 17023 / DSM 158 / JCM 6121 / CCUG 31486 / LMG 2827 / NBRC 12203 / NCIMB 8253 / ATH 2.4.1.) (Rhodobacter sphaeroides).